The chain runs to 335 residues: Zinc finger protein 396 (335 aa).

The region spanning 52–134 is the SCAN box domain; sequence RQQFRQFGYQ…TMLEDVEREL (83 aa). C2H2-type zinc fingers lie at residues 251–273, 279–301, and 307–329; these read QKCDECGKIFSQSSALILHQRIH, YACDECAKAFSRSAILIQHRRTH, and YKCHDCGKAFSQSSNLFRHRKRH.

This sequence belongs to the krueppel C2H2-type zinc-finger protein family. In terms of assembly, isoforms 1 and 2 can both homo- and hetero-associate. Expressed strongly in liver, moderately in skeletal muscle and weakly in kidney, pancreas, spleen and prostate.

It is found in the nucleus. Its subcellular location is the cytoplasm. Its function is as follows. Isoform 1 and isoform 2 act as DNA-dependent transcriptional repressors. The chain is Zinc finger protein 396 (ZNF396) from Homo sapiens (Human).